Reading from the N-terminus, the 481-residue chain is Cytochrome c oxidase subunit 1 (481 aa).

The chain crosses the membrane as a helical span at residues 22 to 42 (ISYLWLAYWFGMIGFYMSVLI). Ca(2+)-binding residues include Glu-45 and Gly-50. A run of 8 helical transmembrane segments spans residues 64 to 84 (LLFT…GLFG), 109 to 129 (SLLF…LEIG), 151 to 171 (FIIF…VNFI), 194 to 214 (IVLT…VFLM), 240 to 260 (LFWF…FGII), 278 to 298 (MILA…TSYV), 309 to 329 (YFTT…FNWV), and 343 to 363 (LVLF…TGVV). His-69 lines the Fe(II)-heme a pocket. His-246 is a binding site for Cu cation. The segment at residues 246–250 (HPEVY) is a cross-link (1'-histidyl-3'-tyrosine (His-Tyr)). Residue Tyr-250 participates in O2 binding. Positions 374 and 375 each coordinate Mg(2+). Residue His-382 participates in heme a3 binding. Transmembrane regions (helical) follow at residues 382–402 (HFHF…IIYI) and 420–440 (IAPI…FTGF). His-384 lines the Fe(II)-heme a pocket. Pro-448 serves as a coordination point for Ca(2+). Residues 459 to 479 (FICTLGATMMLVLKLAILFII) form a helical membrane-spanning segment.

The protein belongs to the heme-copper respiratory oxidase family. Component of the cytochrome c oxidase (complex IV, CIV), a multisubunit enzyme composed of a catalytic core of 3 subunits and several supernumerary subunits. The complex exists as a monomer or a dimer and forms supercomplexes (SCs) in the inner mitochondrial membrane with ubiquinol-cytochrome c oxidoreductase (cytochrome b-c1 complex, complex III, CIII). The cofactor is heme. Cu cation is required as a cofactor.

It is found in the mitochondrion inner membrane. The catalysed reaction is 4 Fe(II)-[cytochrome c] + O2 + 8 H(+)(in) = 4 Fe(III)-[cytochrome c] + 2 H2O + 4 H(+)(out). Its pathway is energy metabolism; oxidative phosphorylation. In terms of biological role, component of the cytochrome c oxidase, the last enzyme in the mitochondrial electron transport chain which drives oxidative phosphorylation. The respiratory chain contains 3 multisubunit complexes succinate dehydrogenase (complex II, CII), ubiquinol-cytochrome c oxidoreductase (cytochrome b-c1 complex, complex III, CIII) and cytochrome c oxidase (complex IV, CIV), that cooperate to transfer electrons derived from NADH and succinate to molecular oxygen, creating an electrochemical gradient over the inner membrane that drives transmembrane transport and the ATP synthase. Cytochrome c oxidase is the component of the respiratory chain that catalyzes the reduction of oxygen to water. Electrons originating from reduced cytochrome c in the intermembrane space (IMS) are transferred via the dinuclear copper A center (CU(A)) of subunit 2 and heme A of subunit 1 to the active site in subunit 1, a binuclear center (BNC) formed by heme A3 and copper B (CU(B)). The BNC reduces molecular oxygen to 2 water molecules using 4 electrons from cytochrome c in the IMS and 4 protons from the mitochondrial matrix. In Theileria parva (East coast fever infection agent), this protein is Cytochrome c oxidase subunit 1 (MT-CO1).